The chain runs to 2296 residues: Protein Ycf2 (2296 aa).

Position 1650 to 1657 (1650 to 1657 (GSIGIGRS)) interacts with ATP.

It belongs to the Ycf2 family.

It localises to the plastid. The protein resides in the chloroplast stroma. In terms of biological role, probable ATPase of unknown function. Its presence in a non-photosynthetic plant (Epifagus virginiana) and experiments in tobacco indicate that it has an essential function which is probably not related to photosynthesis. In Arabis hirsuta (Hairy rock-cress), this protein is Protein Ycf2.